Here is a 238-residue protein sequence, read N- to C-terminus: MSDSTKASLSSANMGNIHIDPTGFVKLGAQLPTLANILAQAIDELGLTLSAQQQRSLLLYLDQLLLWNKAYNLTAITDPVEALIKHVIDCLAIITHLPSGSLLDIGTGAGLPAVIIAICQPERSCTALDSNQKKIRFIKQVSSELGLSNMQPIASRIEAHEASYDVITSRAFASLIDFVAVAEPRLADNGYLCAMKGKAPSEEELDALSNDWQFKTIKLNVPRLHDSRHLIELSYKNV.

S-adenosyl-L-methionine is bound by residues G106, L111, I157–E158, and R170.

This sequence belongs to the methyltransferase superfamily. RNA methyltransferase RsmG family.

The protein resides in the cytoplasm. The catalysed reaction is guanosine(527) in 16S rRNA + S-adenosyl-L-methionine = N(7)-methylguanosine(527) in 16S rRNA + S-adenosyl-L-homocysteine. Functionally, specifically methylates the N7 position of guanine in position 527 of 16S rRNA. The chain is Ribosomal RNA small subunit methyltransferase G from Psychrobacter cryohalolentis (strain ATCC BAA-1226 / DSM 17306 / VKM B-2378 / K5).